The chain runs to 401 residues: Imidazolonepropionase (401 aa).

His66 and His68 together coordinate Fe(3+). Residues His66 and His68 each coordinate Zn(2+). Arg75, Tyr138, and His171 together coordinate 4-imidazolone-5-propanoate. Residue Tyr138 coordinates N-formimidoyl-L-glutamate. His236 contacts Fe(3+). His236 contributes to the Zn(2+) binding site. Residue Gln239 coordinates 4-imidazolone-5-propanoate. Asp311 contributes to the Fe(3+) binding site. Zn(2+) is bound at residue Asp311. N-formimidoyl-L-glutamate is bound by residues Asn313 and Gly315. Thr316 is a binding site for 4-imidazolone-5-propanoate.

The protein belongs to the metallo-dependent hydrolases superfamily. HutI family. The cofactor is Zn(2+). It depends on Fe(3+) as a cofactor.

The protein resides in the cytoplasm. The catalysed reaction is 4-imidazolone-5-propanoate + H2O = N-formimidoyl-L-glutamate. It participates in amino-acid degradation; L-histidine degradation into L-glutamate; N-formimidoyl-L-glutamate from L-histidine: step 3/3. In terms of biological role, catalyzes the hydrolytic cleavage of the carbon-nitrogen bond in imidazolone-5-propanoate to yield N-formimidoyl-L-glutamate. It is the third step in the universal histidine degradation pathway. The polypeptide is Imidazolonepropionase (Pseudomonas putida (strain ATCC 700007 / DSM 6899 / JCM 31910 / BCRC 17059 / LMG 24140 / F1)).